Reading from the N-terminus, the 290-residue chain is Enoyl-CoA hydratase, mitochondrial (290 aa).

The transit peptide at 1 to 27 (MAALRALLPRACSSLLSSVRCPELRRF) directs the protein to the mitochondrion. Substrate is bound at residue 98-101 (ADIK). Lysine 101 is modified (N6-acetyllysine; alternate). An N6-succinyllysine; alternate modification is found at lysine 101. Serine 114 carries the phosphoserine modification. At lysine 115 the chain carries N6-acetyllysine; alternate. N6-succinyllysine; alternate is present on lysine 115. Position 141 (glycine 141) interacts with substrate. Lysine 204 carries the post-translational modification N6-succinyllysine. Lysine 211 is modified (N6-acetyllysine). Lysine 217 carries the N6-acetyllysine; alternate modification. Lysine 217 carries the N6-succinyllysine; alternate modification.

Belongs to the enoyl-CoA hydratase/isomerase family. As to quaternary structure, homohexamer; dimer of trimers. In terms of processing, acetylation of Lys-101 is observed in liver mitochondria from fasted mice but not from fed mice.

The protein localises to the mitochondrion matrix. It carries out the reaction a (3S)-3-hydroxyacyl-CoA = a (2E)-enoyl-CoA + H2O. It catalyses the reaction a (3E)-enoyl-CoA = a 4-saturated (2E)-enoyl-CoA. The enzyme catalyses (3E)-hexenoyl-CoA = (2E)-hexenoyl-CoA. The catalysed reaction is (3S)-3-hydroxybutanoyl-CoA = (2E)-butenoyl-CoA + H2O. It carries out the reaction 3-hydroxyisovaleryl-CoA = 3-methylbut-2-enoyl-CoA + H2O. It catalyses the reaction 3-hydroxypropanoyl-CoA = acryloyl-CoA + H2O. The enzyme catalyses 3-hydroxybutanoyl-CoA = (2E)-butenoyl-CoA + H2O. The catalysed reaction is 2-methylpropenoyl-CoA + H2O = (S)-3-hydroxyisobutanoyl-CoA. It carries out the reaction (3S)-hydroxyhexanoyl-CoA = (2E)-hexenoyl-CoA + H2O. It catalyses the reaction (3S)-hydroxydecanoyl-CoA = (2E)-decenoyl-CoA + H2O. Its pathway is lipid metabolism; fatty acid beta-oxidation. Converts unsaturated trans-2-enoyl-CoA species ((2E)-enoyl-CoA) to the corresponding (3S)-3-hydroxyacyl-CoA species through addition of a water molecule to the double bond. Catalyzes the hydration of medium- and short-chained fatty enoyl-CoA thioesters from 4 carbons long (C4) up to C16. Has high substrate specificity for crotonyl-CoA ((2E)-butenoyl-CoA) and moderate specificity for acryloyl-CoA, 3-methylcrotonyl-CoA (3-methyl-(2E)-butenoyl-CoA) and methacrylyl-CoA ((2E)-2-methylpropenoyl-CoA). Can bind tiglyl-CoA (2-methylcrotonoyl-CoA), but hydrates only a small amount of this substrate. Plays a key role in the beta-oxidation spiral of short- and medium-chain fatty acid oxidation. At a lower rate than the hydratase reaction, catalyzes the isomerase reaction of trans-3-enoyl-CoA species (such as (3E)-hexenoyl-CoA) to trans-2-enoyl-CoA species (such as (2E)-hexenoyl-CoA), which are subsequently hydrated to 3(S)-3-hydroxyacyl-CoA species (such as (3S)-hydroxyhexanoyl-CoA). The protein is Enoyl-CoA hydratase, mitochondrial of Mus musculus (Mouse).